Here is a 363-residue protein sequence, read N- to C-terminus: MTPRGPGRLQRLSQCRPQRGSGGPARGLRQLALAAMLGALAVTVSGCSWSEALGIGWPEGITPEAHLNRELWIGAVIASLAVGVIVWGLIFWSAVFHRKKNTDTELPRQFGYNMPLELVLTVIPFLIISVLFYFTVVVQEKMLQIAKDPEVVIDITSFQWNWKFGYQRVNFKDGTLTYDGADPERKRAMVSKPEGKDKYGEELVGPVRGLNTEDRTYLNFDKVETLGTSTEIPVLVLPSGKRIEFQMASADVIHAFWVPEFLFKRDVMPNPVANNSVNVFQIEEITKTGAFVGHCAEMCGTYHSMMNFEVRVVTPNDFKAYLQQRIDGKTNAEALRAINQPPLAVTTHPFDTRRGELAPQPVG.

The disordered stretch occupies residues 1-23; sequence MTPRGPGRLQRLSQCRPQRGSGG. Positions 1–41 are cleaved as a signal peptide; it reads MTPRGPGRLQRLSQCRPQRGSGGPARGLRQLALAAMLGALA. 2 consecutive transmembrane segments (helical) span residues 71–91 and 118–138; these read LWIG…GLIF and LVLT…TVVV. Cu cation is bound by residues His254, Cys295, Cys299, and His303.

The protein belongs to the cytochrome c oxidase subunit 2 family. The cofactor is Cu cation. Heme is required as a cofactor.

The protein resides in the cell membrane. The catalysed reaction is 4 Fe(II)-[cytochrome c] + O2 + 8 H(+)(in) = 4 Fe(III)-[cytochrome c] + 2 H2O + 4 H(+)(out). In terms of biological role, subunits I and II form the functional core of the enzyme complex. Electrons originating in cytochrome c are transferred via heme a and Cu(A) to the binuclear center formed by heme a3 and Cu(B). This Mycobacterium bovis (strain ATCC BAA-935 / AF2122/97) protein is Cytochrome c oxidase subunit 2 (ctaC).